The chain runs to 609 residues: MRAGDETETSIMRPQYPGDDIRPTSKKELAGWYSYGWAAEVFTVCAMGSFLPITLEQMARDRGVLLSDKVTPCSATLNGPSKTSTQAQWTLSSRYYAGGPTVVSQCVVYIFGVEINTASFAMYTFSVSVFIQAILIISMSGAADHGSHRKLLLVAFAVIGSVSTMLFLGVVPKIYMVGAVIAIIANTCFGASFVLLNSFLPLLVRHHPSVLRGAREPPPALDGSRAQEGHSDTTNDIDHGVESNATSPLLHAHQGNSENAEADMHPATPITVSQELKLSTRISSFGIGIGYIGAIILQIVCILVVIATNQTTFSLRLVLFLIGLWWFIFTIPAALWLRSRPGPPFTTTHQGKHTRSWIGYMAYAWKSLYRTAVRTRHLKDILLFLAAWLLLSDGIATVSGTAVLFAKTQLNMQPAALGLINVIAMVAGVLGAFSWGSVSRVFNLSASQTIIACILLFELVPLYGLLGFIPAVKSLGFLGLQQPWEMFPLGIVYGLVMGGLSSYCRSFFGELIPPGNEAAFYALYAITDKGSSIFGPAIVGIITDRYGEIRPAFVFLAILIFLPLPLMLLVDVERGKRDALALAAELQPSGAQTYGTLPANEDRAPPSEL.

Helical transmembrane passes span Tyr-95 to Ile-115, Thr-117 to Ile-137, Leu-151 to Val-171, and Met-176 to Leu-196. Residues Ala-214 to Asp-238 form a disordered region. A compositionally biased stretch (basic and acidic residues) spans Arg-225 to Asp-238. Residue Asn-244 is glycosylated (N-linked (GlcNAc...) asparagine). A helical membrane pass occupies residues Ile-287 to Ala-307. An N-linked (GlcNAc...) asparagine glycan is attached at Asn-309. Helical transmembrane passes span Leu-317–Leu-337, Ile-381–Thr-401, and Ala-415–Trp-435. The N-linked (GlcNAc...) asparagine glycan is linked to Asn-443. 4 consecutive transmembrane segments (helical) span residues Ile-450–Pro-470, Phe-487–Gly-509, Ala-522–Ile-542, and Ala-552–Val-572.

The protein belongs to the ATG22 family.

It is found in the vacuole membrane. Vacuolar effluxer which mediate the efflux of amino acids resulting from autophagic degradation. The release of autophagic amino acids allows the maintenance of protein synthesis and viability during nitrogen starvation. This chain is Autophagy-related protein 22-1 (atg22-1), found in Neosartorya fischeri (strain ATCC 1020 / DSM 3700 / CBS 544.65 / FGSC A1164 / JCM 1740 / NRRL 181 / WB 181) (Aspergillus fischerianus).